Reading from the N-terminus, the 69-residue chain is Large ribosomal subunit protein bL31 (69 aa).

Zn(2+) contacts are provided by Cys-17, Cys-19, Cys-37, and Cys-40.

This sequence belongs to the bacterial ribosomal protein bL31 family. Type A subfamily. Part of the 50S ribosomal subunit. Requires Zn(2+) as cofactor.

Binds the 23S rRNA. This is Large ribosomal subunit protein bL31 from Caldicellulosiruptor bescii (strain ATCC BAA-1888 / DSM 6725 / KCTC 15123 / Z-1320) (Anaerocellum thermophilum).